The sequence spans 157 residues: UPF0587 protein C2D10.03c (157 aa).

Residues Cys-34, Cys-37, Cys-68, and Cys-71 each coordinate Zn(2+).

This sequence belongs to the UPF0587 family.

The protein is UPF0587 protein C2D10.03c of Schizosaccharomyces pombe (strain 972 / ATCC 24843) (Fission yeast).